The sequence spans 328 residues: Glyoxylate reductase/hydroxypyruvate reductase (328 aa).

At Ser-36 the chain carries Phosphoserine. A substrate-binding site is contributed by 83–84 (VG). NADP(+) is bound by residues 162 to 164 (GRI), 185 to 188 (RQPR), Ser-217, and Ile-243. Residues Arg-245, Asp-269, and 293 to 296 (HIGS) contribute to the substrate site. The active-site Proton donor is His-293. NADP(+) is bound at residue Gly-295. Thr-298 is subject to Phosphothreonine.

Belongs to the D-isomer specific 2-hydroxyacid dehydrogenase family. In terms of assembly, homodimer.

It catalyses the reaction glycolate + NADP(+) = glyoxylate + NADPH + H(+). It carries out the reaction (R)-glycerate + NAD(+) = 3-hydroxypyruvate + NADH + H(+). The enzyme catalyses (R)-glycerate + NADP(+) = 3-hydroxypyruvate + NADPH + H(+). Functionally, enzyme with hydroxy-pyruvate reductase, glyoxylate reductase and D-glycerate dehydrogenase enzymatic activities. Reduces hydroxypyruvate to D-glycerate, glyoxylate to glycolate oxidizes D-glycerate to hydroxypyruvate. The sequence is that of Glyoxylate reductase/hydroxypyruvate reductase (Grhpr) from Mus musculus (Mouse).